The sequence spans 886 residues: Leucine--tRNA ligase (886 aa).

The 'HIGH' region motif lies at Pro-51 to His-61. The 'KMSKS' region signature appears at Lys-644–Ser-648. An ATP-binding site is contributed by Lys-647.

It belongs to the class-I aminoacyl-tRNA synthetase family.

Its subcellular location is the cytoplasm. The enzyme catalyses tRNA(Leu) + L-leucine + ATP = L-leucyl-tRNA(Leu) + AMP + diphosphate. This Bartonella tribocorum (strain CIP 105476 / IBS 506) protein is Leucine--tRNA ligase.